We begin with the raw amino-acid sequence, 428 residues long: Probable mitochondrial adenine nucleotide transporter BTL3 (428 aa).

Solcar repeat units follow at residues 129-212, 222-307, and 336-421; these read LNTT…YRGQ, TTNF…LKSA, and LGPM…MKVV. The next 6 membrane-spanning stretches (helical) occupy residues 132–152, 187–207, 228–248, 283–303, 342–362, and 390–410; these read TKHLWAGAFAAMVSRTCIAPL, GNLVNILRTAPFKSINFYAYD, FVAGAAAGVTASLLCLPLDTI, LVPSLVSMAPSGAVFYGVYDI, LLYGAIAGACSEAATYPFEVV, and VPALYAGLIPSLLQVLPSAAI.

This sequence belongs to the mitochondrial carrier (TC 2.A.29) family.

The protein localises to the mitochondrion inner membrane. Probable mitochondrial adenylate carrier that catalyzes the transport of ATP, ADP and AMP. The chain is Probable mitochondrial adenine nucleotide transporter BTL3 from Arabidopsis thaliana (Mouse-ear cress).